Reading from the N-terminus, the 429-residue chain is Adenylosuccinate synthetase (429 aa).

GTP-binding positions include 12 to 18 (GDEGKGK) and 40 to 42 (GHT). Asp13 serves as the catalytic Proton acceptor. Mg(2+)-binding residues include Asp13 and Gly40. IMP-binding positions include 13-16 (DEGK), 38-41 (NAGH), Thr130, Arg144, Gln225, Thr240, and Arg304. His41 (proton donor) is an active-site residue. A substrate-binding site is contributed by 300 to 306 (ATTGRPR). Residues Arg306, 332–334 (KLD), and 414–416 (SVG) each bind GTP.

Belongs to the adenylosuccinate synthetase family. Homodimer. The cofactor is Mg(2+).

It is found in the cytoplasm. It carries out the reaction IMP + L-aspartate + GTP = N(6)-(1,2-dicarboxyethyl)-AMP + GDP + phosphate + 2 H(+). Its pathway is purine metabolism; AMP biosynthesis via de novo pathway; AMP from IMP: step 1/2. In terms of biological role, plays an important role in the de novo pathway of purine nucleotide biosynthesis. Catalyzes the first committed step in the biosynthesis of AMP from IMP. The protein is Adenylosuccinate synthetase of Syntrophobacter fumaroxidans (strain DSM 10017 / MPOB).